The chain runs to 225 residues: NAD(P)H-quinone oxidoreductase subunit K, chloroplastic (225 aa).

C43, C44, C108, and C139 together coordinate [4Fe-4S] cluster.

Belongs to the complex I 20 kDa subunit family. In terms of assembly, NDH is composed of at least 16 different subunits, 5 of which are encoded in the nucleus. It depends on [4Fe-4S] cluster as a cofactor.

It is found in the plastid. It localises to the chloroplast thylakoid membrane. It carries out the reaction a plastoquinone + NADH + (n+1) H(+)(in) = a plastoquinol + NAD(+) + n H(+)(out). The enzyme catalyses a plastoquinone + NADPH + (n+1) H(+)(in) = a plastoquinol + NADP(+) + n H(+)(out). NDH shuttles electrons from NAD(P)H:plastoquinone, via FMN and iron-sulfur (Fe-S) centers, to quinones in the photosynthetic chain and possibly in a chloroplast respiratory chain. The immediate electron acceptor for the enzyme in this species is believed to be plastoquinone. Couples the redox reaction to proton translocation, and thus conserves the redox energy in a proton gradient. The protein is NAD(P)H-quinone oxidoreductase subunit K, chloroplastic of Helianthus annuus (Common sunflower).